Here is a 163-residue protein sequence, read N- to C-terminus: Nucleotide-binding protein MUL_0671 (163 aa).

It belongs to the YajQ family.

Its function is as follows. Nucleotide-binding protein. The polypeptide is Nucleotide-binding protein MUL_0671 (Mycobacterium ulcerans (strain Agy99)).